The chain runs to 66 residues: Large ribosomal subunit protein bL35 (66 aa).

Residues 1–16 (MPKQKTHRASAKRFKR) are compositionally biased toward basic residues. Residues 1 to 20 (MPKQKTHRASAKRFKRTGSG) are disordered.

The protein belongs to the bacterial ribosomal protein bL35 family.

The sequence is that of Large ribosomal subunit protein bL35 from Streptococcus uberis (strain ATCC BAA-854 / 0140J).